Consider the following 518-residue polypeptide: Sensor protein kinase HptS (518 aa).

The next 2 membrane-spanning stretches (helical) occupy residues 20 to 40 (IFPV…IYIW) and 222 to 242 (GITL…FGFI). One can recognise a Histidine kinase domain in the interval 297-513 (EQLIHSIEHT…LICYKIPLSR (217 aa)). Residue H325 is modified to Phosphohistidine; by autocatalysis.

Post-translationally, autophosphorylated.

The protein resides in the cell membrane. It carries out the reaction ATP + protein L-histidine = ADP + protein N-phospho-L-histidine.. Its function is as follows. Member of the two-component regulatory system HptS/HptR that regulates genes involved in hexose phosphate transport system in response to changes in extracellular phosphate sources. May act as a sensor protein kinase which is autophosphorylated at a histidine residue and transfers its phosphate group to the conserved aspartic acid residue in the regulatory domain of HptS. In turn, HptS antagonizes CcpA-dependent transcription of a subset of CcpA-regulated genes involved in antibiotic susceptibility. The protein is Sensor protein kinase HptS (hptS) of Staphylococcus aureus (strain MSSA476).